The following is a 339-amino-acid chain: MRLSTPNLQLNEQGKLRHFLTIEGLKQHHLTEILDVAESFINPVTGDISKVPSLHGKTIMNLFFEPSTRTLTTFEIAEKRLSADVVNLNIETSSTKKGETLLDTLWNLEAMLADVFVVRHSESGAAHFIAKHVAPHVHVVNAGDGQHAHPTQAMLDMFTIRKHKGDIFDLKVAIIGDVQHSRVVRSQIQALSILEAREIRVIGPKTLMPSHPEALGVHVYDHIEEGLDGVDVIINVRLQNERMKSALLPSEKEFFNLYGLTKERLSYAKPDAIVMHPGPVNRGVEIDSEVADGHQSVILEQVTYGIAVRMAVMSIIIDNAKQLNADKQITKKVTEEARS.

Residues arginine 69 and threonine 70 each contribute to the carbamoyl phosphate site. An L-aspartate-binding site is contributed by lysine 97. Carbamoyl phosphate is bound by residues arginine 119, histidine 149, and glutamine 152. Residues arginine 182 and arginine 237 each coordinate L-aspartate. Carbamoyl phosphate contacts are provided by glycine 278 and proline 279.

The protein belongs to the aspartate/ornithine carbamoyltransferase superfamily. ATCase family. Heterododecamer (2C3:3R2) of six catalytic PyrB chains organized as two trimers (C3), and six regulatory PyrI chains organized as three dimers (R2).

The catalysed reaction is carbamoyl phosphate + L-aspartate = N-carbamoyl-L-aspartate + phosphate + H(+). The protein operates within pyrimidine metabolism; UMP biosynthesis via de novo pathway; (S)-dihydroorotate from bicarbonate: step 2/3. Catalyzes the condensation of carbamoyl phosphate and aspartate to form carbamoyl aspartate and inorganic phosphate, the committed step in the de novo pyrimidine nucleotide biosynthesis pathway. The sequence is that of Aspartate carbamoyltransferase catalytic subunit from Hydrogenovibrio crunogenus (strain DSM 25203 / XCL-2) (Thiomicrospira crunogena).